Consider the following 387-residue polypeptide: Galactokinase (387 aa).

33–36 (EHID) contacts substrate. ATP-binding positions include S67 and 124–130 (GAGLSSS). Mg(2+) is bound by residues S130 and E162. The active-site Proton acceptor is the D174. Y224 is a binding site for substrate.

This sequence belongs to the GHMP kinase family. GalK subfamily.

The protein resides in the cytoplasm. The enzyme catalyses alpha-D-galactose + ATP = alpha-D-galactose 1-phosphate + ADP + H(+). Its pathway is carbohydrate metabolism; galactose metabolism. Its function is as follows. Catalyzes the transfer of the gamma-phosphate of ATP to D-galactose to form alpha-D-galactose-1-phosphate (Gal-1-P). The polypeptide is Galactokinase (Clostridium perfringens (strain 13 / Type A)).